Here is a 59-residue protein sequence, read N- to C-terminus: Cecropin-A2 (59 aa).

Positions 1–23 (MNFNKLFAIVLLAALVLLGQTEA) are cleaved as a signal peptide.

Belongs to the cecropin family.

Its subcellular location is the secreted. Cecropins have lytic and antibacterial activity against several Gram-positive and Gram-negative bacteria. The sequence is that of Cecropin-A2 (CECA2) from Aedes albopictus (Asian tiger mosquito).